The chain runs to 361 residues: MSGKAKARRAAMFFRGCSEDASGSTSGSTLLSEDENPDTNGVTRSWKIILSTMFTLTFLLVGLLSHQWLKETEVPQKSRQLYAIIAEYGSRLYKYQARLRMPKEQLELLKKESQTLENNFHKILLLIEQIDVLKALLRDMKDGTDNNHSWNTHGDPVEDPDHTEVLDEEMSNLVNYVLKKLREDQVQMADYALKSAGASIIEAGTSESYKNNKAKLYWHGISFLNHEMPPDIILQPDVYPGNCWAFPGSQGHTLIKLATKIIPTAVTMEHISEKVSPSGNISSAPKEFSVYGITKKCEGEEIFLGQFIYNKTGTTVQTFELQHAVSEYLLCVKLNIFSNWGHPKYTCLYRFRVHGTPGKHI.

Residues 1 to 47 (MSGKAKARRAAMFFRGCSEDASGSTSGSTLLSEDENPDTNGVTRSWK) are Nuclear-facing. Residues 19–38 (EDASGSTSGSTLLSEDENPD) form a disordered region. Residues 22–31 (SGSTSGSTLL) show a composition bias toward low complexity. The helical transmembrane segment at 48 to 69 (IILSTMFTLTFLLVGLLSHQWL) threads the bilayer. Topologically, residues 70–361 (KETEVPQKSR…RVHGTPGKHI (292 aa)) are perinuclear space. Residues 103-129 (KEQLELLKKESQTLENNFHKILLLIEQ) adopt a coiled-coil conformation. The region spanning 197–358 (GASIIEAGTS…YRFRVHGTPG (162 aa)) is the SUN domain.

Self-associates. Interacts with SYNE1 and SPAG4/SUN4. Proposed to form a spermatogenesis-specific LINC complex with SYNE1 during sperm head formation possibly implicating a SUN domain-based heterotrimer with SPAG4/SUN4 associating with SYNE1.

Its subcellular location is the membrane. It localises to the nucleus envelope. It is found in the nucleus inner membrane. In terms of biological role, as a probable component of the LINC (LInker of Nucleoskeleton and Cytoskeleton) complex, involved in the connection between the nuclear lamina and the cytoskeleton. The nucleocytoplasmic interactions established by the LINC complex play an important role in the transmission of mechanical forces across the nuclear envelope and in nuclear movement and positioning. May be involved in nuclear remodeling during sperm head formation in spermatogenesis. A probable SUN3:SYNE1 LINC complex may tether spermatid nuclei to posterior cytoskeletal structures such as the manchette. This is SUN domain-containing protein 3 (SUN3) from Macaca fascicularis (Crab-eating macaque).